Here is a 112-residue protein sequence, read N- to C-terminus: Putative UPF0320 protein YEL074W (112 aa).

A disordered region spans residues 93 to 112; the sequence is EKSPSKSPKHKNILPFNFTK.

It belongs to the UPF0320 family.

The chain is Putative UPF0320 protein YEL074W from Saccharomyces cerevisiae (strain ATCC 204508 / S288c) (Baker's yeast).